The primary structure comprises 261 residues: Arcelin-5B (261 aa).

Residues 1-21 (MASSKLLSLALFLVLLTHANS) form the signal peptide. Residues asparagine 91 and asparagine 100 are each glycosylated (N-linked (GlcNAc...) asparagine). A disulfide bridge connects residues cysteine 167 and cysteine 203.

The protein belongs to the leguminous lectin family. As to quaternary structure, monomer.

In terms of biological role, seed storage. This carbohydrate-binding lectin has toxic effects on bean bruchid pests. The polypeptide is Arcelin-5B (ARC5B) (Phaseolus vulgaris (Kidney bean)).